Here is a 746-residue protein sequence, read N- to C-terminus: Taurocyamine kinase (746 aa).

2 Approximate repeats span residues 31-393 (MQVE…PEGV) and 394-705 (MPVE…YGEH). The 82-residue stretch at 35–116 (SLQNLQAKIR…FDAVIADYHK (82 aa)) folds into the Phosphagen kinase N-terminal 1 domain. The Phosphagen kinase C-terminal 1 domain maps to 146–382 (LVVSTRVRLG…RALLELEVML (237 aa)). Residues 149–153 (STRVR), H212, and R256 each bind ATP. C298 is a catalytic residue. Residues 307 to 311 (RASVH) and 335 to 340 (RGTHGE) contribute to the ATP site. Positions 398-479 (PLTYLAKLLE…LDPLICDYHG (82 aa)) constitute a Phosphagen kinase N-terminal 2 domain. Positions 509–746 (FIVSTRVRVG…AKMIEIEKGL (238 aa)) constitute a Phosphagen kinase C-terminal 2 domain. Residues 512 to 516 (STRVR), H575, and R619 contribute to the ATP site. C661 is a catalytic residue. ATP-binding positions include 670–674 (RASVL) and 699–704 (RGLYGE).

This sequence belongs to the ATP:guanido phosphotransferase family. Mg(2+) serves as cofactor.

The catalysed reaction is taurocyamine + ATP = N-phosphotaurocyamine + ADP + H(+). Its function is as follows. This family of enzymes reversibly catalyzes the transfer of phosphate between ATP and various phosphogens (e.g. creatine phosphate). The polypeptide is Taurocyamine kinase (Schistosoma mansoni (Blood fluke)).